A 225-amino-acid polypeptide reads, in one-letter code: 7-cyano-7-deazaguanine synthase (225 aa).

10 to 20 is an ATP binding site; the sequence is FSGGQDSTTLA. The Zn(2+) site is built by Cys-190, Cys-205, Cys-208, and Cys-211.

This sequence belongs to the QueC family. Requires Zn(2+) as cofactor.

The enzyme catalyses 7-carboxy-7-deazaguanine + NH4(+) + ATP = 7-cyano-7-deazaguanine + ADP + phosphate + H2O + H(+). The protein operates within purine metabolism; 7-cyano-7-deazaguanine biosynthesis. Functionally, catalyzes the ATP-dependent conversion of 7-carboxy-7-deazaguanine (CDG) to 7-cyano-7-deazaguanine (preQ(0)). The chain is 7-cyano-7-deazaguanine synthase from Helicobacter acinonychis (strain Sheeba).